A 245-amino-acid polypeptide reads, in one-letter code: tRNA pseudouridine synthase A 2 (245 aa).

Residue Asp53 is the Nucleophile of the active site. Tyr111 is a substrate binding site.

It belongs to the tRNA pseudouridine synthase TruA family. Homodimer.

The catalysed reaction is uridine(38/39/40) in tRNA = pseudouridine(38/39/40) in tRNA. Its function is as follows. Formation of pseudouridine at positions 38, 39 and 40 in the anticodon stem and loop of transfer RNAs. In Bacillus cereus (strain ATCC 10987 / NRS 248), this protein is tRNA pseudouridine synthase A 2.